Here is a 590-residue protein sequence, read N- to C-terminus: Conglutin beta 4 (590 aa).

Residues Met1–Gly30 form the signal peptide. Residues His38–Glu105 are compositionally biased toward basic and acidic residues. The tract at residues His38–Tyr175 is disordered. Over residues Gln137–Gln146 the composition is skewed to low complexity. One can recognise a Cupin type-1 1 domain in the interval Tyr174 to Gln332. Asn239 is a glycosylation site (N-linked (GlcNAc...) asparagine). 2 disordered regions span residues Asp340–Val362 and Lys374–Asn396. Basic and acidic residues predominate over residues Glu346–Val362. One can recognise a Cupin type-1 2 domain in the interval Phe391 to Glu548. An N-linked (GlcNAc...) asparagine glycan is attached at Asn498. Residues Phe559–Arg579 are disordered.

The protein belongs to the 7S seed storage protein family. As to quaternary structure, component of globulins complexes which accumulate in seeds.

Functionally, seed storage protein. Accumulates during seed development and is hydrolyzed after germination to provide a carbon and nitrogen source for the developing seedling. The chain is Conglutin beta 4 from Lupinus angustifolius (Narrow-leaved blue lupine).